A 364-amino-acid chain; its full sequence is Transposase for insertion sequence element IS1111A (364 aa).

The protein belongs to the transposase IS1111A/IS1328/IS1533 family.

Required for the transposition of the insertion element. The sequence is that of Transposase for insertion sequence element IS1111A from Coxiella burnetii (strain RSA 493 / Nine Mile phase I).